Consider the following 20-residue polypeptide: T cell receptor alpha joining 3 (20 aa).

Alpha-beta TR is a heterodimer composed of an alpha and beta chain; disulfide-linked. The alpha-beta TR is associated with the transmembrane signaling CD3 coreceptor proteins to form the TR-CD3 (TcR or TCR). The assembly of alpha-beta TR heterodimers with CD3 occurs in the endoplasmic reticulum where a single alpha-beta TR heterodimer associates with one CD3D-CD3E heterodimer, one CD3G-CD3E heterodimer and one CD247 homodimer forming a stable octameric structure. CD3D-CD3E and CD3G-CD3E heterodimers preferentially associate with TR alpha and TR beta chains, respectively. The association of the CD247 homodimer is the last step of TcR assembly in the endoplasmic reticulum and is required for transport to the cell surface.

Its subcellular location is the cell membrane. In terms of biological role, j region of the variable domain of T cell receptor (TR) alpha chain that participates in the antigen recognition. Alpha-beta T cell receptors are antigen specific receptors which are essential to the immune response and are present on the cell surface of T lymphocytes. Recognize peptide-major histocompatibility (MH) (pMH) complexes that are displayed by antigen presenting cells (APC), a prerequisite for efficient T cell adaptive immunity against pathogens. Binding of alpha-beta TR to pMH complex initiates TR-CD3 clustering on the cell surface and intracellular activation of LCK that phosphorylates the ITAM motifs of CD3G, CD3D, CD3E and CD247 enabling the recruitment of ZAP70. In turn ZAP70 phosphorylates LAT, which recruits numerous signaling molecules to form the LAT signalosome. The LAT signalosome propagates signal branching to three major signaling pathways, the calcium, the mitogen-activated protein kinase (MAPK) kinase and the nuclear factor NF-kappa-B (NF-kB) pathways, leading to the mobilization of transcription factors that are critical for gene expression and essential for T cell growth and differentiation. The T cell repertoire is generated in the thymus, by V-(D)-J rearrangement. This repertoire is then shaped by intrathymic selection events to generate a peripheral T cell pool of self-MH restricted, non-autoaggressive T cells. Post-thymic interaction of alpha-beta TR with the pMH complexes shapes TR structural and functional avidity. This is T cell receptor alpha joining 3 from Homo sapiens (Human).